A 716-amino-acid polypeptide reads, in one-letter code: Eosinophil peroxidase (716 aa).

An N-terminal signal peptide occupies residues 1–18 (MMQQLLALVGALATLILT). Positions 19-140 (QHAEGTAPAS…SGCALQDQAE (122 aa)) are excised as a propeptide. Residues Asn-53 and Asn-114 are each glycosylated (N-linked (GlcNAc...) asparagine). An intrachain disulfide couples Cys-142 to Cys-153. Asp-233 is a heme b binding site. The Proton acceptor role is filled by His-234. A Ca(2+)-binding site is contributed by Asp-235. 2 cysteine pairs are disulfide-bonded: Cys-254–Cys-264 and Cys-258–Cys-282. Thr-307, Phe-309, Asp-311, and Ser-313 together coordinate Ca(2+). N-linked (GlcNAc...) asparagine glycans are attached at residues Asn-328 and Asn-364. Cys-360 and Cys-371 are joined by a disulfide. Heme b contacts are provided by Glu-381 and His-475. The residue at position 489 (Tyr-489) is a 3'-nitrotyrosine. 2 disulfides stabilise this stretch: Cys-579–Cys-636 and Cys-677–Cys-702. N-linked (GlcNAc...) asparagine glycosylation occurs at Asn-709.

This sequence belongs to the peroxidase family. XPO subfamily. In terms of assembly, tetramer of two light chains and two heavy chains. Ca(2+) serves as cofactor. It depends on heme b as a cofactor.

It localises to the cytoplasmic granule. It catalyses the reaction 2 a phenolic donor + H2O2 = 2 a phenolic radical donor + 2 H2O. Mediates tyrosine nitration of secondary granule proteins in mature resting eosinophils. This is Eosinophil peroxidase (Epx) from Mus musculus (Mouse).